A 1026-amino-acid polypeptide reads, in one-letter code: MEAAVCSEIEREDGDSSCGDVCFMDKGLHSISELSLDSSIHAINLHCNNISKISSIDHIWNLRHLDLSSNQISQIEGLNTLTKLCTLNLSCNLITRVEGLEALVNLTKLNLSYNHINDLSGLMPLHGLKYKLRYIDLHSNYIDSIHHLLQCTVGLHFLTNLILEKDGEGNPICLIPGYRAIILQTLPQLRILDCKNIFGEPVSLEEINSSHLQCLEGLLDNLVSSDSPLNISEDEVNDDVPAPPMDVLPSLKEFKSTPEDNVLASLLSVCPSSEPEKINQENDFQNEVKLQKLDDQILQLLNETNNSLIDNVPEKDLRPKRDTDITSESDYGNRRECSRKVPRRTKIPYYARTIQTIKHHNKNNGAFVSCNRKMRQPYLRDLYVRSSLVNCNNLRDLDEQKTGVIKVDKNFSDNSTYRSLVEQLDQEREMRWKAEQTEKKLMDYIDELHKQADEKKDVHSQALITTDRLKDAIFKERHCKAQLEIIVHRLQNEVKKLTIELMKARDQQEDHIRHLRTLERALEKMEKQKAQQQAAQIRLIQEVELKASAADREINLLRTSLHQEKQQVQQLHELLALKEQEHRQEIETRQFFTDAEFQDALTKRLCKEERKHEQEVKEYQEKIDILNQQYLDLENEFRIALTVEARRFKDVQDGFEDVATELAKSKHALIWAQRKENESSSLIKDLTCMVKEQKTKLSEVCKLKQEAAANLQNQINTLEILIEDDKQKSIQIELLKHEKTQLISELAAKESLIYGLRTERKVWGQELACQSSTLSQSRGKLEAQIESLCRENESLRKSHESDCDALRIKCKIIEDQNETIRKLKDSLQEKDGQIKLLQEQIALIEKCSQEQLNEKSSQLDSIVEKLERHNERKEKLKQQLKAKELELEEIRKAYSTLNKKWHDKGELLSHLEMQVKEVKEKFEDKERKLKAERDKSLELQKDAMEKLQNMDDAFRRQVDEIVEAHQAEIMQLANEKQKYIDCANLKVQQVEDEMRGLLDETCKNKKMMEEKIKQLACAISEIQKEM.

LRR repeat units follow at residues 39–60, 61–82, 83–104, 105–126, and 131–152; these read SIHA…DHIW, NLRH…NTLT, KLCT…EALV, NLTK…MPLH, and KLRY…LQCT. An LRRCT domain is found at 170–212; sequence NPICLIPGYRAIILQTLPQLRILDCKNIFGEPVSLEEINSSHL. Residues 310-338 form a disordered region; that stretch reads DNVPEKDLRPKRDTDITSESDYGNRRECS. Residues 312-324 are compositionally biased toward basic and acidic residues; that stretch reads VPEKDLRPKRDTD. A coiled-coil region spans residues 428–641; that stretch reads REMRWKAEQT…DLENEFRIAL (214 aa).

This sequence belongs to the LRRCC1 family.

It localises to the cytoplasm. It is found in the cytoskeleton. The protein localises to the microtubule organizing center. Its subcellular location is the centrosome. The protein resides in the centriole. In terms of biological role, required for the organization of the mitotic spindle. Maintains the structural integrity of centrosomes during mitosis. This chain is Leucine-rich repeat and coiled-coil domain-containing protein 1 (Lrrcc1), found in Mus musculus (Mouse).